Here is a 510-residue protein sequence, read N- to C-terminus: Adenosine deaminase 2 (510 aa).

The first 24 residues, 1–24 (MSGWPVLPALLLAVAMSSFHSATS), serve as a signal peptide directing secretion. Positions 25–95 (RDEERNRLLM…GLMEKSAVFN (71 aa)) are dimerization. Residues histidine 107 and histidine 109 each contribute to the Zn(2+) site. Aspartate 110 lines the substrate pocket. Residue asparagine 122 is glycosylated (N-linked (GlcNAc...) asparagine). Positions 122-182 (NATYRPYCYF…TEFDNSLLRT (61 aa)) are PRB domain. A disulfide bridge connects residues cysteine 132 and cysteine 156. A glycan (N-linked (GlcNAc...) asparagine) is linked at asparagine 171. Substrate-binding positions include 201–208 (WKKFKTIF), histidine 290, and glycine 323. Residue histidine 353 coordinates Zn(2+). Residue glutamate 356 is the Proton donor of the active site. An N-linked (GlcNAc...) asparagine glycan is attached at asparagine 375. Histidine 381 functions as the Proton acceptor in the catalytic mechanism. Aspartate 438 is a Zn(2+) binding site. Aspartate 439 provides a ligand contact to substrate.

Belongs to the metallo-dependent hydrolases superfamily. Adenosine and AMP deaminases family. ADGF subfamily. As to quaternary structure, homodimer. Interacts with adenosine receptors. Binds heparin. Zn(2+) serves as cofactor.

The protein resides in the secreted. The catalysed reaction is adenosine + H2O + H(+) = inosine + NH4(+). Its function is as follows. Adenosine deaminase that may contribute to the degradation of extracellular adenosine, a signaling molecule that controls a variety of cellular responses. Requires elevated adenosine levels for optimal enzyme activity. Binds to cell surfaces via proteoglycans and may play a role in the regulation of cell proliferation and differentiation, independently of its enzyme activity. This chain is Adenosine deaminase 2, found in Sus scrofa (Pig).